We begin with the raw amino-acid sequence, 64 residues long: DNA gyrase inhibitor YacG (64 aa).

Zn(2+) is bound by residues C7, C10, C26, and C30. The segment at 43–64 is disordered; it reads KRIPGPINPDLLPYPDEGEQWQ.

The protein belongs to the DNA gyrase inhibitor YacG family. Interacts with GyrB. Zn(2+) is required as a cofactor.

Inhibits all the catalytic activities of DNA gyrase by preventing its interaction with DNA. Acts by binding directly to the C-terminal domain of GyrB, which probably disrupts DNA binding by the gyrase. This is DNA gyrase inhibitor YacG from Aeromonas salmonicida (strain A449).